The primary structure comprises 161 residues: Nucleotide-binding protein BMASAVP1_A0673 (161 aa).

It belongs to the YajQ family.

In terms of biological role, nucleotide-binding protein. In Burkholderia mallei (strain SAVP1), this protein is Nucleotide-binding protein BMASAVP1_A0673.